A 38-amino-acid chain; its full sequence is MLYNMNYLVFSLLWYFLVGGGKGEVCWRFLGIVKSPNT.

Residues 10 to 32 traverse the membrane as a helical segment; that stretch reads FSLLWYFLVGGGKGEVCWRFLGI.

The protein localises to the membrane. This is an uncharacterized protein from Saccharomyces cerevisiae (strain ATCC 204508 / S288c) (Baker's yeast).